Reading from the N-terminus, the 874-residue chain is Isopimaradiene synthase, chloroplastic (874 aa).

Polar residues predominate over residues 1 to 12 (MALPSSSLSSRI). Residues 1–20 (MALPSSSLSSRIPTGPHPLT) form a disordered region. Residues 1 to 37 (MALPSSSLSSRIPTGPHPLTHTQCIPHFSTTINAGIS) constitute a chloroplast transit peptide. 6 residues coordinate Mg(2+): Asp407, Asp409, Asp626, Asp630, Asn770, and Glu778. The DXDD motif motif lies at 407-410 (DIDD). Positions 626–630 (DDLYD) match the DDXXD motif motif.

The protein belongs to the terpene synthase family. Tpsd subfamily. Mg(2+) is required as a cofactor. It depends on Mn(2+) as a cofactor.

The protein resides in the plastid. It is found in the chloroplast. It carries out the reaction (+)-copalyl diphosphate = isopimara-8(14),15-diene + diphosphate. It functions in the pathway terpene metabolism; oleoresin biosynthesis. In terms of biological role, terpene synthase (TPS) involved in the biosynthesis of diterpene natural products included in conifer oleoresin secretions and volatile emissions; these compounds contribute to biotic and abiotic stress defense against herbivores and pathogens. Catalyzes the conversion of (+)-copalyl diphosphate ((+)-CPP) to isopimaradiene. The protein is Isopimaradiene synthase, chloroplastic of Picea sitchensis (Sitka spruce).